Consider the following 126-residue polypeptide: Hydrogenase maturation factor HypA (126 aa).

His-2 is a binding site for Ni(2+). Zn(2+) is bound by residues Cys-78, Cys-81, Cys-97, and Cys-100.

This sequence belongs to the HypA/HybF family.

Involved in the maturation of [NiFe] hydrogenases. Required for nickel insertion into the metal center of the hydrogenase. This is Hydrogenase maturation factor HypA from Methanococcus maripaludis (strain C5 / ATCC BAA-1333).